A 168-amino-acid chain; its full sequence is ATP synthase subunit b (168 aa).

The helical transmembrane segment at 11–31 threads the bilayer; it reads NTVLGNIIVVSGAFIILLVLL.

It belongs to the ATPase B chain family. In terms of assembly, F-type ATPases have 2 components, F(1) - the catalytic core - and F(0) - the membrane proton channel. F(1) has five subunits: alpha(3), beta(3), gamma(1), delta(1), epsilon(1). F(0) has three main subunits: a(1), b(2) and c(10-14). The alpha and beta chains form an alternating ring which encloses part of the gamma chain. F(1) is attached to F(0) by a central stalk formed by the gamma and epsilon chains, while a peripheral stalk is formed by the delta and b chains.

It is found in the cell membrane. F(1)F(0) ATP synthase produces ATP from ADP in the presence of a proton or sodium gradient. F-type ATPases consist of two structural domains, F(1) containing the extramembraneous catalytic core and F(0) containing the membrane proton channel, linked together by a central stalk and a peripheral stalk. During catalysis, ATP synthesis in the catalytic domain of F(1) is coupled via a rotary mechanism of the central stalk subunits to proton translocation. Its function is as follows. Component of the F(0) channel, it forms part of the peripheral stalk, linking F(1) to F(0). In Lactococcus lactis subsp. lactis (strain IL1403) (Streptococcus lactis), this protein is ATP synthase subunit b.